A 373-amino-acid chain; its full sequence is 3 beta-hydroxysteroid dehydrogenase/Delta 5--&gt;4-isomerase type 1 (373 aa).

NADP(+)-binding positions include 10 to 15 (GAGGFL), Tyr-155, and Lys-159. The active-site Proton donor is Lys-159. Residues 288–308 (VALLYWLGFLLELVSFLLRPV) form a helical membrane-spanning segment.

It belongs to the 3-beta-HSD family. In terms of tissue distribution, high levels in adrenal gland, kidney and male liver. Low levels in female liver.

It localises to the endoplasmic reticulum membrane. The protein localises to the mitochondrion membrane. It carries out the reaction a 3beta-hydroxy-Delta(5)-steroid + NAD(+) = a 3-oxo-Delta(5)-steroid + NADH + H(+). The enzyme catalyses pregnenolone + NAD(+) = pregn-5-ene-3,20-dione + NADH + H(+). It catalyses the reaction 3beta-hydroxyandrost-5-en-17-one + NAD(+) = androst-5-ene-3,17-dione + NADH + H(+). The catalysed reaction is androst-5-en-3beta,17beta-diol + NAD(+) = 17beta-hydroxy-androst-5-en-3-one + NADH + H(+). It carries out the reaction a 3beta-hydroxysteroid + NADP(+) = a 3-oxosteroid + NADPH + H(+). The enzyme catalyses 5alpha-androstane-3beta,17beta-diol + NADP(+) = 17beta-hydroxy-5alpha-androstan-3-one + NADPH + H(+). It catalyses the reaction 3beta-hydroxy-5alpha-androstan-17-one + NADP(+) = 5alpha-androstan-3,17-dione + NADPH + H(+). The catalysed reaction is a 3-oxo-Delta(5)-steroid = a 3-oxo-Delta(4)-steroid. It carries out the reaction pregn-5-ene-3,20-dione = progesterone. The enzyme catalyses androst-5-ene-3,17-dione = androst-4-ene-3,17-dione. It catalyses the reaction 17beta-hydroxy-androst-5-en-3-one = testosterone. The catalysed reaction is 5alpha-androstane-3beta,17beta-diol + NAD(+) = 17beta-hydroxy-5alpha-androstan-3-one + NADH + H(+). It participates in steroid hormone biosynthesis. Its pathway is steroid metabolism. In terms of biological role, a bifunctional enzyme responsible for the oxidation and isomerization of 3beta-hydroxy-Delta(5)-steroid precursors to 3-oxo-Delta(4)-steroids, an essential step in steroid hormone biosynthesis. Specifically catalyzes the conversion of pregnenolone to progesterone, 17alpha-hydroxypregnenolone to 17alpha-hydroxyprogesterone, dehydroepiandrosterone (DHEA) to 4-androstenedione, and androstenediol to testosterone. Additionally, catalyzes the interconversion between 3beta-hydroxy and 3-oxo-5alpha-androstane steroids controlling the bioavalability of the active forms. Specifically converts dihydrotestosterone to its inactive form 5alpha-androstanediol, that does not bind androgen receptor/AR. Also converts androstanedione, a precursor of testosterone and estrone, to epiandrosterone. Expected to use NAD(+) as preferred electron donor for the 3-beta-hydroxy-steroid dehydrogenase activity and NADPH for the 3-ketosteroid reductase activity. The sequence is that of 3 beta-hydroxysteroid dehydrogenase/Delta 5--&gt;4-isomerase type 1 (HSD3B1) from Mesocricetus auratus (Golden hamster).